Here is a 97-residue protein sequence, read N- to C-terminus: Protein S100-A10 (97 aa).

One can recognise an EF-hand domain in the interval 47–82; that stretch reads RDPMALDKIMKDLDQCRDGKVGFQSFFSLVAGLTIA. The interval 60-71 is ancestral calcium site; the sequence is DQCRDGKVGFQS.

The protein belongs to the S-100 family. As to quaternary structure, heterotetramer containing 2 light chains of S100A10/p11 and 2 heavy chains of ANXA2/p36.

Functionally, because S100A10 induces the dimerization of ANXA2/p36, it may function as a regulator of protein phosphorylation in that the ANXA2 monomer is the preferred target (in vitro) of tyrosine-specific kinase. The protein is Protein S100-A10 (S100A10) of Gallus gallus (Chicken).